The chain runs to 378 residues: Quinolinate synthase (378 aa).

Iminosuccinate-binding residues include His-59 and Ser-80. Cys-125 provides a ligand contact to [4Fe-4S] cluster. Iminosuccinate-binding positions include 151–153 and Ser-168; that span reads YAN. Cys-212 is a binding site for [4Fe-4S] cluster. Iminosuccinate contacts are provided by residues 238 to 240 and Thr-255; that span reads HPE. Cys-309 is a [4Fe-4S] cluster binding site.

This sequence belongs to the quinolinate synthase family. Type 1 subfamily. Requires [4Fe-4S] cluster as cofactor.

Its subcellular location is the cytoplasm. It catalyses the reaction iminosuccinate + dihydroxyacetone phosphate = quinolinate + phosphate + 2 H2O + H(+). It functions in the pathway cofactor biosynthesis; NAD(+) biosynthesis; quinolinate from iminoaspartate: step 1/1. Its function is as follows. Catalyzes the condensation of iminoaspartate with dihydroxyacetone phosphate to form quinolinate. This is Quinolinate synthase from Burkholderia orbicola (strain MC0-3).